The following is a 617-amino-acid chain: DNA mismatch repair protein MutL (617 aa).

It belongs to the DNA mismatch repair MutL/HexB family.

Functionally, this protein is involved in the repair of mismatches in DNA. It is required for dam-dependent methyl-directed DNA mismatch repair. May act as a 'molecular matchmaker', a protein that promotes the formation of a stable complex between two or more DNA-binding proteins in an ATP-dependent manner without itself being part of a final effector complex. This is DNA mismatch repair protein MutL from Christiangramia forsetii (strain DSM 17595 / CGMCC 1.15422 / KT0803) (Gramella forsetii).